A 323-amino-acid polypeptide reads, in one-letter code: Sphingolipid delta(4)-desaturase DES1 (323 aa).

Glycine 2 carries the N-myristoyl glycine lipid modification. A run of 2 helical transmembrane segments spans residues 41-61 (PNLI…FYIV) and 68-88 (WVIF…TLGI). The Histidine box-1 signature appears at 89–93 (HEIAH). The chain crosses the membrane as a helical span at residues 107-127 (WFGMFANLPIGIPYSVSFKSY). The Histidine box-2 motif lies at 128–132 (HMDHH). Helical transmembrane passes span 152–172 (FFCT…FYAF), 184–204 (YLEV…YYFL), and 209–229 (LVYM…SGHF). Residues 259–263 (HNEHH) carry the Histidine box-3 motif. Serine 307 carries the phosphoserine modification.

It belongs to the fatty acid desaturase type 1 family. DEGS subfamily. As to quaternary structure, interacts with RLBP1; the interaction increases synthesis of chromophore-precursors by DEGS1. In terms of processing, myristoylation can target the enzyme to the mitochondria leading to an increase in ceramide levels.

Its subcellular location is the mitochondrion membrane. It is found in the endoplasmic reticulum membrane. It catalyses the reaction an N-acylsphinganine + 2 Fe(II)-[cytochrome b5] + O2 + 2 H(+) = an N-acylsphing-4-enine + 2 Fe(III)-[cytochrome b5] + 2 H2O. The catalysed reaction is all-trans-retinol = 11-cis-retinol. It carries out the reaction all-trans-retinol = 9-cis-retinol. The enzyme catalyses all-trans-retinol = 13-cis-retinol. It catalyses the reaction 11-cis-retinol = 13-cis-retinol. The catalysed reaction is 11-cis-retinol = 9-cis-retinol. In terms of biological role, has sphingolipid-delta-4-desaturase activity. Converts D-erythro-sphinganine to D-erythro-sphingosine (E-sphing-4-enine). Catalyzes the equilibrium isomerization of retinols. The protein is Sphingolipid delta(4)-desaturase DES1 (DEGS1) of Pongo abelii (Sumatran orangutan).